The chain runs to 200 residues: Recombination protein RecR (200 aa).

The C4-type zinc-finger motif lies at 58–75 (CSNCFCLKISQTSPCNFC). One can recognise a Toprim domain in the interval 82-177 (SSLCIVATPK…KISRLALGMP (96 aa)).

It belongs to the RecR family.

In terms of biological role, may play a role in DNA repair. It seems to be involved in an RecBC-independent recombinational process of DNA repair. It may act with RecF and RecO. This chain is Recombination protein RecR, found in Chlamydia trachomatis serovar L2 (strain ATCC VR-902B / DSM 19102 / 434/Bu).